The sequence spans 419 residues: uncharacterized protein (419 aa).

[4Fe-4S] cluster contacts are provided by cysteine 38, cysteine 44, cysteine 47, and cysteine 126. S-adenosyl-L-methionine-binding residues include glutamine 250, tyrosine 280, glutamate 301, and aspartate 346. Cysteine 373 serves as the catalytic Nucleophile.

The protein belongs to the class I-like SAM-binding methyltransferase superfamily. RNA M5U methyltransferase family.

This is an uncharacterized protein from Prochlorococcus marinus (strain SARG / CCMP1375 / SS120).